The following is a 388-amino-acid chain: Flap endonuclease 1 (388 aa).

The segment at Met1 to Arg104 is N-domain. Residue Asp34 participates in Mg(2+) binding. Positions 47 and 70 each coordinate DNA. Residues Asp86, Glu158, Glu160, Asp179, and Asp181 each contribute to the Mg(2+) site. Residues Glu122 to Tyr253 are I-domain. Glu158 lines the DNA pocket. 2 residues coordinate DNA: Gly231 and Asp233. Asp233 is a binding site for Mg(2+). The interval Thr336–Phe344 is interaction with PCNA. The interval Pro351–Lys388 is disordered.

The protein belongs to the XPG/RAD2 endonuclease family. FEN1 subfamily. In terms of assembly, interacts with PCNA. Three molecules of FEN1 bind to one PCNA trimer with each molecule binding to one PCNA monomer. PCNA stimulates the nuclease activity without altering cleavage specificity. Mg(2+) serves as cofactor. In terms of processing, phosphorylated. Phosphorylation upon DNA damage induces relocalization to the nuclear plasma.

It is found in the nucleus. The protein resides in the nucleolus. Its subcellular location is the nucleoplasm. It localises to the mitochondrion. Functionally, structure-specific nuclease with 5'-flap endonuclease and 5'-3' exonuclease activities involved in DNA replication and repair. During DNA replication, cleaves the 5'-overhanging flap structure that is generated by displacement synthesis when DNA polymerase encounters the 5'-end of a downstream Okazaki fragment. It enters the flap from the 5'-end and then tracks to cleave the flap base, leaving a nick for ligation. Also involved in the long patch base excision repair (LP-BER) pathway, by cleaving within the apurinic/apyrimidinic (AP) site-terminated flap. Acts as a genome stabilization factor that prevents flaps from equilibrating into structures that lead to duplications and deletions. Also possesses 5'-3' exonuclease activity on nicked or gapped double-stranded DNA, and exhibits RNase H activity. Also involved in replication and repair of rDNA and in repairing mitochondrial DNA. The polypeptide is Flap endonuclease 1 (Drosophila mojavensis (Fruit fly)).